Reading from the N-terminus, the 145-residue chain is 3-dehydroquinate dehydratase (145 aa).

Catalysis depends on Y23, which acts as the Proton acceptor. Substrate contacts are provided by N74, H80, and D87. H100 (proton donor) is an active-site residue. Substrate-binding positions include 101–102 (IS) and R111.

Belongs to the type-II 3-dehydroquinase family. As to quaternary structure, homododecamer.

The enzyme catalyses 3-dehydroquinate = 3-dehydroshikimate + H2O. It functions in the pathway metabolic intermediate biosynthesis; chorismate biosynthesis; chorismate from D-erythrose 4-phosphate and phosphoenolpyruvate: step 3/7. In terms of biological role, catalyzes a trans-dehydration via an enolate intermediate. This is 3-dehydroquinate dehydratase from Dictyoglomus turgidum (strain DSM 6724 / Z-1310).